Here is a 524-residue protein sequence, read N- to C-terminus: Anthranilate synthase component 1 (524 aa).

Residues methionine 1–threonine 16 show a composition bias toward polar residues. The tract at residues methionine 1–glutamate 25 is disordered. Residues serine 74 and proline 298–methionine 300 each bind L-tryptophan. Chorismate is bound at residue glycine 339 to threonine 340. Lysine 355 is covalently cross-linked (Isoglutamyl lysine isopeptide (Lys-Gln) (interchain with Q-Cter in protein Pup)). Residue glutamate 366 coordinates Mg(2+). Chorismate is bound by residues tyrosine 454, arginine 474, glycine 488–glycine 490, and glycine 490. Glutamate 503 is a binding site for Mg(2+).

The protein belongs to the anthranilate synthase component I family. As to quaternary structure, heterotetramer consisting of two non-identical subunits: a beta subunit (TrpG) and a large alpha subunit (TrpE). Mg(2+) serves as cofactor.

The enzyme catalyses chorismate + L-glutamine = anthranilate + pyruvate + L-glutamate + H(+). It participates in amino-acid biosynthesis; L-tryptophan biosynthesis; L-tryptophan from chorismate: step 1/5. Feedback inhibited by tryptophan. In terms of biological role, part of a heterotetrameric complex that catalyzes the two-step biosynthesis of anthranilate, an intermediate in the biosynthesis of L-tryptophan. In the first step, the glutamine-binding beta subunit (TrpG) of anthranilate synthase (AS) provides the glutamine amidotransferase activity which generates ammonia as a substrate that, along with chorismate, is used in the second step, catalyzed by the large alpha subunit of AS (TrpE) to produce anthranilate. In the absence of TrpG, TrpE can synthesize anthranilate directly from chorismate and high concentrations of ammonia. The chain is Anthranilate synthase component 1 (trpE) from Mycolicibacterium smegmatis (strain ATCC 700084 / mc(2)155) (Mycobacterium smegmatis).